We begin with the raw amino-acid sequence, 209 residues long: Protease (209 aa).

Residues His-55, Asp-72, and Cys-123 contribute to the active site.

It belongs to the peptidase C5 family. Interacts with protease cofactor pVI-C; this interaction is necessary for protease activation.

The protein resides in the virion. Its subcellular location is the host nucleus. It catalyses the reaction Cleaves proteins of the adenovirus and its host cell at two consensus sites: -Yaa-Xaa-Gly-Gly-|-Xaa- and -Yaa-Xaa-Gly-Xaa-|-Gly- (in which Yaa is Met, Ile or Leu, and Xaa is any amino acid).. Requires DNA and protease cofactor for maximal activation. Inside nascent virions, becomes partially activated by binding to the viral DNA, allowing it to cleave the cofactor that binds to the protease and fully activates it. Actin, like the viral protease cofactor, seems to act as a cofactor in the cleavage of cytokeratin 18 and of actin itself. Its function is as follows. Cleaves viral precursor proteins (pTP, pIIIa, pVI, pVII, pVIII, and pX) inside newly assembled particles giving rise to mature virions. Protease complexed to its cofactor slides along the viral DNA to specifically locate and cleave the viral precursors. Mature virions have a weakened organization compared to the unmature virions, thereby facilitating subsequent uncoating. Without maturation, the particle lacks infectivity and is unable to uncoat. Late in adenovirus infection, in the cytoplasm, may participate in the cytoskeleton destruction. Cleaves host cell cytoskeletal keratins K7 and K18. This Human adenovirus D serotype 9 (HAdV-9) protein is Protease.